The chain runs to 247 residues: Aliphatic sulfonates import ATP-binding protein SsuB 2 (247 aa).

One can recognise an ABC transporter domain in the interval valine 28–leucine 242. Glycine 60 to threonine 67 contacts ATP.

Belongs to the ABC transporter superfamily. Aliphatic sulfonates importer (TC 3.A.1.17.2) family. The complex is composed of two ATP-binding proteins (SsuB), two transmembrane proteins (SsuC) and a solute-binding protein (SsuA).

The protein localises to the cell inner membrane. It carries out the reaction ATP + H2O + aliphatic sulfonate-[sulfonate-binding protein]Side 1 = ADP + phosphate + aliphatic sulfonateSide 2 + [sulfonate-binding protein]Side 1.. Part of the ABC transporter complex SsuABC involved in aliphatic sulfonates import. Responsible for energy coupling to the transport system. This Paraburkholderia xenovorans (strain LB400) protein is Aliphatic sulfonates import ATP-binding protein SsuB 2.